Consider the following 103-residue polypeptide: Integration host factor subunit alpha (103 aa).

The tract at residues 55 to 74 is disordered; it reads CREKPQRPGRNPKTGEEMPI.

The protein belongs to the bacterial histone-like protein family. Heterodimer of an alpha and a beta chain.

Functionally, this protein is one of the two subunits of integration host factor, a specific DNA-binding protein that functions in genetic recombination as well as in transcriptional and translational control. This is Integration host factor subunit alpha from Thiobacillus denitrificans (strain ATCC 25259 / T1).